The primary structure comprises 266 residues: Probable metal transport system membrane protein TP_0036 (266 aa).

The next 8 membrane-spanning stretches (helical) occupy residues 10–30, 34–54, 56–76, 88–108, 120–140, 172–192, 211–231, and 238–258; these read AFVASFLIALLCPLVGMHLVL, ALMGDALAHGSLAGVSIAVSC, IHPGWGSFFFTALVGVLIEFL, LSIVLSLSVGIAVTLLSSGLI, ILVVSTRDLWIMLALSVFCVG, VASVVISATIAASIKITGILV, FLLTLVAAFLFSMLDTALGLV, and VAPGGFTALVSVVVLMLVIAL.

Belongs to the ABC-3 integral membrane protein family.

The protein localises to the cell inner membrane. Part of an ATP-driven transport system TP_0034/TP_0035/TP_0036 for a metal. The sequence is that of Probable metal transport system membrane protein TP_0036 from Treponema pallidum (strain Nichols).